A 311-amino-acid polypeptide reads, in one-letter code: 5'-adenylylsulfate reductase-like 3 (311 aa).

Residues 1-22 (MATRLLCWTALLLPIIAATAAA) form the signal peptide. Residues 23–164 (SPLPEACPVP…LAAFYRDVSG (142 aa)) enclose the Thioredoxin domain. Asn139 is a glycosylation site (N-linked (GlcNAc...) asparagine). A helical transmembrane segment spans residues 210–230 (LALATAFVILRLLYLLFPKIG). 2 N-linked (GlcNAc...) asparagine glycosylation sites follow: Asn281 and Asn305.

It is found in the membrane. This Oryza sativa subsp. japonica (Rice) protein is 5'-adenylylsulfate reductase-like 3 (APRL3).